A 289-amino-acid chain; its full sequence is MEEGADSVKLYDQNNTLSERHIKADKNADERVPDQMWLRCPHCHQLLFAKQLTQYAVCPNCDYGLRIPARHRLSWLVDSFKEFDKDLQTKNPLHFPGYQEKISKLQRQTKLNDSVLTGEASINDQLFSLGIMDPTFIMGSLGTVTGEKITRLFEYATTHRQAVVLFTASGGARMQEGIMSLMQMAKVSQAINEHAAAGLLYIVVLTDPTTGGVTASFAMDGDIILAEPHALVGFAGRRVIEQTIHQQIPIDLQSAENILHHGFIDRIVKRQDEKKLLEWLLKTGSVANE.

The CoA carboxyltransferase N-terminal domain maps to 36-289; the sequence is MWLRCPHCHQ…LLKTGSVANE (254 aa). 4 residues coordinate Zn(2+): cysteine 40, cysteine 43, cysteine 58, and cysteine 61. Residues 40-61 form a C4-type zinc finger; it reads CPHCHQLLFAKQLTQYAVCPNC.

This sequence belongs to the AccD/PCCB family. Acetyl-CoA carboxylase is a heterohexamer composed of biotin carboxyl carrier protein (AccB), biotin carboxylase (AccC) and two subunits each of ACCase subunit alpha (AccA) and ACCase subunit beta (AccD). It depends on Zn(2+) as a cofactor.

The protein resides in the cytoplasm. It carries out the reaction N(6)-carboxybiotinyl-L-lysyl-[protein] + acetyl-CoA = N(6)-biotinyl-L-lysyl-[protein] + malonyl-CoA. The protein operates within lipid metabolism; malonyl-CoA biosynthesis; malonyl-CoA from acetyl-CoA: step 1/1. Component of the acetyl coenzyme A carboxylase (ACC) complex. Biotin carboxylase (BC) catalyzes the carboxylation of biotin on its carrier protein (BCCP) and then the CO(2) group is transferred by the transcarboxylase to acetyl-CoA to form malonyl-CoA. This Limosilactobacillus reuteri subsp. reuteri (strain JCM 1112) (Lactobacillus reuteri) protein is Acetyl-coenzyme A carboxylase carboxyl transferase subunit beta.